The primary structure comprises 619 residues: Dihydroxy-acid dehydratase (619 aa).

Aspartate 81 is a Mg(2+) binding site. Cysteine 122 provides a ligand contact to [2Fe-2S] cluster. Residues aspartate 123 and lysine 124 each contribute to the Mg(2+) site. Position 124 is an N6-carboxylysine (lysine 124). Cysteine 195 contacts [2Fe-2S] cluster. Glutamate 491 is a Mg(2+) binding site. The active-site Proton acceptor is serine 517.

Belongs to the IlvD/Edd family. Homodimer. The cofactor is [2Fe-2S] cluster. Requires Mg(2+) as cofactor.

The enzyme catalyses (2R)-2,3-dihydroxy-3-methylbutanoate = 3-methyl-2-oxobutanoate + H2O. The catalysed reaction is (2R,3R)-2,3-dihydroxy-3-methylpentanoate = (S)-3-methyl-2-oxopentanoate + H2O. The protein operates within amino-acid biosynthesis; L-isoleucine biosynthesis; L-isoleucine from 2-oxobutanoate: step 3/4. It participates in amino-acid biosynthesis; L-valine biosynthesis; L-valine from pyruvate: step 3/4. Functionally, functions in the biosynthesis of branched-chain amino acids. Catalyzes the dehydration of (2R,3R)-2,3-dihydroxy-3-methylpentanoate (2,3-dihydroxy-3-methylvalerate) into 2-oxo-3-methylpentanoate (2-oxo-3-methylvalerate) and of (2R)-2,3-dihydroxy-3-methylbutanoate (2,3-dihydroxyisovalerate) into 2-oxo-3-methylbutanoate (2-oxoisovalerate), the penultimate precursor to L-isoleucine and L-valine, respectively. The chain is Dihydroxy-acid dehydratase from Sphingopyxis alaskensis (strain DSM 13593 / LMG 18877 / RB2256) (Sphingomonas alaskensis).